The sequence spans 386 residues: O-methyltransferase 12 (386 aa).

S-adenosyl-L-homocysteine is bound by residues Ser-207, Gly-231, Asp-254, Asp-274, and Lys-288. Asp-254 serves as a coordination point for S-adenosyl-L-methionine. His-292 (proton acceptor) is an active-site residue.

The protein belongs to the class I-like SAM-binding methyltransferase superfamily. Cation-independent O-methyltransferase family. In terms of assembly, homodimer. As to expression, expressed at high levels in all tissues.

The catalysed reaction is 4-hydroxy-3,5-dimethoxyphenethylamine + S-adenosyl-L-methionine = mescaline + S-adenosyl-L-homocysteine + H(+). The enzyme catalyses dopamine + S-adenosyl-L-methionine = 4-methoxytyramine + S-adenosyl-L-homocysteine + H(+). It participates in aromatic compound metabolism. It functions in the pathway alkaloid biosynthesis. Functionally, O-methyltransferase participating in the biosynthesis of natural products derived from phenylethylamine, including mescaline, a natural hallucinogen potentially used in psychotherapeutic treatments. Catalyzes the O-methylation of dopamine, 4-hydroxy-3,5-dimethoxyphenethylamine, 4,5-dihydroxy-3-methoxyphenethylamine and N-methyl-4,5-dihydroxy-3-methoxyphenethylamine. Also involved in the conversion of N-methyl-4-hydroxy-3,5-dimethoxyphenethylamine to N-methylmescaline. The protein is O-methyltransferase 12 of Lophophora williamsii (Peyote).